Reading from the N-terminus, the 145-residue chain is Polytheonamide B (145 aa).

A propeptide spanning residues 1–96 is cleaved from the precursor; the sequence is MADSDNTPTS…DDDLDQAAGG (96 aa). Residue Thr97 is modified to 2-oxo-5,5-dimethylhexanoate. Ile99 is subject to 3-methylisoleucine. At Val101 the chain carries 3-methylvaline. Residue Val102 is modified to 3-methyl-D-valine. Val103 carries the post-translational modification 3-methylvaline. At Ala104 the chain carries D-alanine (Ala). The residue at position 105 (Val105) is a 3-methylvaline. Val106 and Val110 each carry 3-methyl-D-valine. Asn112 is modified (N4-methyl-D-asparagine). A 3-hydroxyvaline (Thr) modification is found at Thr113. A 3-methylvaline modification is found at Val117. Asn118 is modified (N4-methyl-D-asparagine). Gln119 bears the (3S)-3-methylglutamine mark. 3-hydroxy-D-valine is present on Val120. N4-methyl-D-asparagine is present on Asn124. At Asn126 the chain carries (3R)-N4-methyl-3-hydroxy-D-asparagine. Val127 is subject to 3-methylvaline. Val128 carries the 3-hydroxy-D-valine modification. Residues Asn130 and Asn132 each carry the N4-methyl-D-asparagine modification. Asn134 is modified ((3R)-N4-methyl-3-hydroxy-D-asparagine). Asn136 bears the N4-methyl-D-asparagine mark. Ser138 bears the D-serine (Ser) mark. Asn140 is subject to D-asparagine. Residue Met141 is modified to 3,3-dimethylmethionine. Asn142 is subject to D-asparagine. A D-threonine modification is found at Thr144.

In terms of processing, epimerization of most, and perhaps all, L- to D-amino acids is catalyzed by PoyD, when PoyA and PoyD are coexpressed in E.coli. N-methylations are catalyzed by PoyE, when PoyA and PoyE are coexpressed in E.coli. Post-translationally, to obtain 2-oxo-5,5-dimethylhexanoate, Thr-97 is firstly dehydrated by PoyF. The second step possibly corresponds to methylation by PoyB/C, and the third step may be a cleavage by PoyH/J.

Functionally, antimicrobial peptide active against Gram-positive bacteria (MIC=4-&gt;125 ug/ml). May act by forming transmembrane ion channels, since the peptide rapidly depolarizes the bacterial cytoplasmic membrane, simultaneously decreasing the membrane potential and intracellular potassium contents. The chain is Polytheonamide B from Bacterium symbiont subsp. Theonella swinhoei (strain pTSMAC1).